Consider the following 687-residue polypeptide: Ataxin-1-like (687 aa).

The span at 1–19 (MKPVHERSQECLPPKKRDL) shows a compositional bias: basic and acidic residues. Disordered stretches follow at residues 1-46 (MKPV…SEWS), 185-223 (ATPP…LDLA), and 261-294 (SALE…KGES). The segment at 20–197 (PVTSEDMGRT…PPQAASPAQS (178 aa)) is interaction with NCOR2 and ATXN1. The self-association stretch occupies residues 20–197 (PVTSEDMGRT…PPQAASPAQS (178 aa)). Polar residues-rich tracts occupy residues 28–43 (RTTS…SDAS) and 198–219 (FNKS…NTQP). The segment covering 272–283 (RQRERNVRRESE) has biased composition (basic and acidic residues). Phosphoserine is present on serine 282. Threonine 328 is subject to Phosphothreonine. The interval 356–379 (DEPSPLNLSHHNLDHQGEGRGSAR) is disordered. The residue at position 359 (serine 359) is a Phosphoserine. An AXH domain is found at 455–586 (PPPVTSSHLP…SISLQSLNSN (132 aa)). Residues 587–649 (SVSQASCAPP…PGAQACWPAP (63 aa)) form a disordered region.

It belongs to the ATXN1 family. As to quaternary structure, homodimer. Interacts (via AXH domain) with NCOR2. Interacts with ATXN1 and CIC. Directly interacts with RBPJ; this interaction is disrupted in the presence of Notch intracellular domain. Competes with ATXN1 for RBPJ-binding. Found in a complex with CIC and ATXN1. In terms of tissue distribution, expressed in the cortex and hypothalamus (at protein level). Expressed in neuronal cells. Highly expressed in Purkinje cells of cerebellum.

It is found in the nucleus. It localises to the cell projection. The protein localises to the dendrite. Chromatin-binding factor that repress Notch signaling in the absence of Notch intracellular domain by acting as a CBF1 corepressor. Binds to the HEY promoter and might assist, along with NCOR2, RBPJ-mediated repression. Can suppress the cytotoxicity of ATXN1 in spinocerebellar ataxia type 1 (SCA1). In concert with CIC and ATXN1, involved in brain development. This is Ataxin-1-like (Atxn1l) from Mus musculus (Mouse).